Reading from the N-terminus, the 182-residue chain is Ribosome-recycling factor (182 aa).

The protein belongs to the RRF family.

The protein resides in the cytoplasm. Functionally, responsible for the release of ribosomes from messenger RNA at the termination of protein biosynthesis. May increase the efficiency of translation by recycling ribosomes from one round of translation to another. The polypeptide is Ribosome-recycling factor (Prochlorococcus marinus (strain AS9601)).